Reading from the N-terminus, the 260-residue chain is Emerin (260 aa).

M1 carries the N-acetylmethionine modification. The region spanning 1–45 (MDDYAVLSDTELAAVLRQYNIPHGPILGSTRKLYEKKIFEYETQR) is the LEM domain. Phosphoserine is present on residues S8 and S29. An interaction with F-actin region spans residues 46 to 224 (RRLSPPSSSS…PTAALGQDRQ (179 aa)). Residue S49 is modified to Phosphoserine; by PKA. Phosphoserine is present on residues S54, S69, S72, S88, S99, S142, S143, and S144. Y162 bears the Phosphotyrosine mark. The interval 169–188 (RPISNVSRSSLGLSYYPRSS) is interaction with CTNNB1. Phosphoserine is present on residues S172, S175, and S177. The segment at 184–206 (YPRSSTSSVSSSSSSPSSWLTRR) is disordered. A compositionally biased stretch (low complexity) spans 187–201 (SSTSSVSSSSSSPSS). Residues 225–245 (VPLWGQLLLFLAFATFLLFVY) form a helical membrane-spanning segment.

In terms of assembly, interacts with lamins A and C, BANF1, GMCL, BCLAF1 and YTHDC1/YT521. Interacts with TMEM43; the interaction retains emerin in the inner nuclear membrane. Interacts with ACTB, SPTAN1, F-actin, CTNNB1 and beta-tubulin. Interacts with SUN1 and SUN2. Interacts with TMEM201. Interacts with NEMP1.

Its subcellular location is the nucleus inner membrane. It is found in the nucleus outer membrane. Its function is as follows. Stabilizes and promotes the formation of a nuclear actin cortical network. Stimulates actin polymerization in vitro by binding and stabilizing the pointed end of growing filaments. Inhibits beta-catenin activity by preventing its accumulation in the nucleus. Acts by influencing the nuclear accumulation of beta-catenin through a CRM1-dependent export pathway. Links centrosomes to the nuclear envelope via a microtubule association. Required for proper localization of non-farnesylated prelamin-A/C. Together with NEMP1, contributes to nuclear envelope stiffness in germ cells. The sequence is that of Emerin (Emd) from Rattus norvegicus (Rat).